Here is a 206-residue protein sequence, read N- to C-terminus: dITP/XTP pyrophosphatase (206 aa).

A substrate-binding site is contributed by 7–12 (SNNAKK). Catalysis depends on Asp72, which acts as the Proton acceptor. Asp72 contributes to the Mg(2+) binding site. Substrate is bound by residues Ser73, 155 to 158 (FGYD), Lys182, and 187 to 188 (HR).

Belongs to the HAM1 NTPase family. As to quaternary structure, homodimer. The cofactor is Mg(2+).

It catalyses the reaction XTP + H2O = XMP + diphosphate + H(+). It carries out the reaction dITP + H2O = dIMP + diphosphate + H(+). The catalysed reaction is ITP + H2O = IMP + diphosphate + H(+). Its function is as follows. Pyrophosphatase that catalyzes the hydrolysis of nucleoside triphosphates to their monophosphate derivatives, with a high preference for the non-canonical purine nucleotides XTP (xanthosine triphosphate), dITP (deoxyinosine triphosphate) and ITP. Seems to function as a house-cleaning enzyme that removes non-canonical purine nucleotides from the nucleotide pool, thus preventing their incorporation into DNA/RNA and avoiding chromosomal lesions. This chain is dITP/XTP pyrophosphatase, found in Corynebacterium glutamicum (strain ATCC 13032 / DSM 20300 / JCM 1318 / BCRC 11384 / CCUG 27702 / LMG 3730 / NBRC 12168 / NCIMB 10025 / NRRL B-2784 / 534).